The sequence spans 467 residues: FAD-dependent oxidoreductase dbaF (467 aa).

The first 20 residues, 1–20 (MKSVLASGALTLAFSLAALA), serve as a signal peptide directing secretion. N96, N134, N337, N391, and N451 each carry an N-linked (GlcNAc...) asparagine glycan.

It belongs to the beta-cyclopiazonate dehydrogenase family. FAD is required as a cofactor.

It functions in the pathway secondary metabolite biosynthesis. FAD-dependent oxidoreductase; part of the gene cluster that mediates the biosynthesis of the antibiotic 2,4-dihydroxy-3-methyl-6-(2-oxopropyl)benzaldehyde (DHMBA) and its derivatives. The direct non-reducing polyketide synthase dbaI product is 2,4-dihydroxy-3-methyl-6-(2-oxopropyl)benzaldehyde (DHMBA), produced by condensation of one acetyl-CoA starter unit with 4 malonyl-CoA units and one methylation step. The FAD-dependent monooxygenase dbaH is responsible for the synthesis of yellow pigments derived from the oxidation of DHMBA. The roles of dbaB, C, E and F have still to be determined. In Emericella nidulans (strain FGSC A4 / ATCC 38163 / CBS 112.46 / NRRL 194 / M139) (Aspergillus nidulans), this protein is FAD-dependent oxidoreductase dbaF.